A 308-amino-acid polypeptide reads, in one-letter code: Tetraacyldisaccharide 4'-kinase (308 aa).

ATP is bound at residue 63-70 (SFGGNGKT).

This sequence belongs to the LpxK family.

It catalyses the reaction a lipid A disaccharide + ATP = a lipid IVA + ADP + H(+). The protein operates within glycolipid biosynthesis; lipid IV(A) biosynthesis; lipid IV(A) from (3R)-3-hydroxytetradecanoyl-[acyl-carrier-protein] and UDP-N-acetyl-alpha-D-glucosamine: step 6/6. Functionally, transfers the gamma-phosphate of ATP to the 4'-position of a tetraacyldisaccharide 1-phosphate intermediate (termed DS-1-P) to form tetraacyldisaccharide 1,4'-bis-phosphate (lipid IVA). The sequence is that of Tetraacyldisaccharide 4'-kinase from Campylobacter jejuni subsp. jejuni serotype O:6 (strain 81116 / NCTC 11828).